Reading from the N-terminus, the 446-residue chain is Phosphoglucosamine mutase (446 aa).

Catalysis depends on S102, which acts as the Phosphoserine intermediate. S102, D241, D243, and D245 together coordinate Mg(2+). The residue at position 102 (S102) is a Phosphoserine.

The protein belongs to the phosphohexose mutase family. It depends on Mg(2+) as a cofactor. Post-translationally, activated by phosphorylation.

It catalyses the reaction alpha-D-glucosamine 1-phosphate = D-glucosamine 6-phosphate. In terms of biological role, catalyzes the conversion of glucosamine-6-phosphate to glucosamine-1-phosphate. The chain is Phosphoglucosamine mutase from Yersinia enterocolitica serotype O:8 / biotype 1B (strain NCTC 13174 / 8081).